A 79-amino-acid polypeptide reads, in one-letter code: RNA-binding protein Hfq (79 aa).

Positions 10 to 70 (DVFLKTVRKQ…ISTIMPGQPI (61 aa)) constitute a Sm domain.

This sequence belongs to the Hfq family. In terms of assembly, homohexamer.

Its function is as follows. RNA chaperone that binds small regulatory RNA (sRNAs) and mRNAs to facilitate mRNA translational regulation in response to envelope stress, environmental stress and changes in metabolite concentrations. Also binds with high specificity to tRNAs. This Bartonella bacilliformis (strain ATCC 35685 / KC583 / Herrer 020/F12,63) protein is RNA-binding protein Hfq.